A 637-amino-acid chain; its full sequence is Glutamate--cysteine ligase catalytic subunit (637 aa).

The residue at position 1 (methionine 1) is an N-acetylmethionine. Phosphoserine occurs at positions 5 and 8.

It belongs to the glutamate--cysteine ligase type 3 family. Heterodimer of a catalytic heavy chain and a regulatory light chain.

The catalysed reaction is L-cysteine + L-glutamate + ATP = gamma-L-glutamyl-L-cysteine + ADP + phosphate + H(+). It carries out the reaction (2S)-2-aminobutanoate + L-glutamate + ATP = gamma-L-glutamyl-(2S)-2-aminobutanoate + ADP + phosphate + H(+). Its pathway is sulfur metabolism; glutathione biosynthesis; glutathione from L-cysteine and L-glutamate: step 1/2. Feedback inhibition by glutathione. In terms of biological role, catalyzes the ATP-dependent ligation of L-glutamate and L-cysteine and participates in the first and rate-limiting step in glutathione biosynthesis. This chain is Glutamate--cysteine ligase catalytic subunit, found in Homo sapiens (Human).